The primary structure comprises 141 residues: Large ribosomal subunit protein uL11 (141 aa).

The protein belongs to the universal ribosomal protein uL11 family. As to quaternary structure, part of the ribosomal stalk of the 50S ribosomal subunit. Interacts with L10 and the large rRNA to form the base of the stalk. L10 forms an elongated spine to which L12 dimers bind in a sequential fashion forming a multimeric L10(L12)X complex. In terms of processing, one or more lysine residues are methylated.

Forms part of the ribosomal stalk which helps the ribosome interact with GTP-bound translation factors. The chain is Large ribosomal subunit protein uL11 from Geobacillus sp. (strain WCH70).